The following is a 511-amino-acid chain: Dopamine receptor 1 (511 aa).

The first 19 residues, 1–19, serve as a signal peptide directing secretion; it reads MYTPHPFGFLIILVPMTNA. The Extracellular segment spans residues 20 to 142; that stretch reads MRAIAAIAAG…EEPEPLSLVS (123 aa). Residues Asn53, Asn63, Asn74, Asn117, and Asn123 are each glycosylated (N-linked (GlcNAc...) asparagine). A helical membrane pass occupies residues 143–169; it reads IVVVGIFLSVLIFLSVAGNILVCLAIY. Residues 170–179 are Cytoplasmic-facing; that stretch reads TERSLRRIGN. A helical transmembrane segment spans residues 180–206; it reads LFLASLAIADLFVASLVMTFAGVNDLL. Topologically, residues 207 to 216 are extracellular; it reads GYWIFGAQFC. Cys216 and Cys302 are disulfide-bonded. A helical membrane pass occupies residues 217 to 239; that stretch reads DTWVAFDVMCSTASILNLCAISM. The Cytoplasmic portion of the chain corresponds to 240–258; sequence DRYIHIKDPLRYGRWVTRR. A helical membrane pass occupies residues 259 to 279; it reads VAVITIAAIWLLAAFVSFVPI. The Extracellular segment spans residues 280-310; sequence SLGIHRPDQPLIFEDNGKKYPTCALDLTPTY. Residues 311-331 form a helical membrane-spanning segment; the sequence is AVVSSCISFYFPCVVMIGIYC. Topologically, residues 332–391 are cytoplasmic; it reads RLYCYAQKHVKSIKAVTRPGEVAEKQRYKSIRRPKNQPKKFKVRNLHTHSSPYHVSDHKA. A helical membrane pass occupies residues 392 to 412; that stretch reads AVTVGVIMGVFLICWVPFFCV. Over 413 to 427 the chain is Extracellular; that stretch reads NITAAFCKTCIGGQT. Residues 428–450 form a helical membrane-spanning segment; the sequence is FKILTWLGYSNSAFNPIIYSIFN. At 451–511 the chain is on the cytoplasmic side; sequence KEFRDAFKRI…SAELEQVSAI (61 aa). Residues Cys468 and Cys469 are each lipidated (S-palmitoyl cysteine).

It belongs to the G-protein coupled receptor 1 family. In terms of tissue distribution, expressed in the larval and adult CNS in structures that mediate higher-order brain functions such as learning, memory and motor control: in the mushroom body neuropil and four unpaired neurons in each thoracic segment. The adult CNS has intense expression in the central complex, moderate expression in several neurosecretory cells, and weak expression in two unpaired neurons in the mesothoracic neuromere. Also seen in the somata of the optic lobes.

Its subcellular location is the cell membrane. Functionally, receptor for dopamine. The activity of this receptor is mediated by G proteins which activate adenylyl cyclase. Might be involved in the processing of visual information and/or visual learning. Important for Pavlovian conditioning: required in the mushroom body as a receptor conveying unconditional stimuli information, has a role in memory formation for aversive and appetitive learning. Sleep-deprivation-induced impairments in learning can be partially explained through alterations in dopamine signaling, Dop1R1 expression levels are reduced; sleep may have a role in restoring dopamine homeostasis. This Drosophila melanogaster (Fruit fly) protein is Dopamine receptor 1 (Dop1R1).